We begin with the raw amino-acid sequence, 263 residues long: L-aspartate dehydrogenase (263 aa).

Residues Ala120 and Asn186 each contribute to the NAD(+) site. His216 is a catalytic residue.

This sequence belongs to the L-aspartate dehydrogenase family.

It carries out the reaction L-aspartate + NADP(+) + H2O = oxaloacetate + NH4(+) + NADPH + H(+). The enzyme catalyses L-aspartate + NAD(+) + H2O = oxaloacetate + NH4(+) + NADH + H(+). It functions in the pathway cofactor biosynthesis; NAD(+) biosynthesis; iminoaspartate from L-aspartate (dehydrogenase route): step 1/1. In terms of biological role, specifically catalyzes the NAD or NADP-dependent dehydrogenation of L-aspartate to iminoaspartate. The chain is L-aspartate dehydrogenase from Acinetobacter baumannii (strain AB307-0294).